The sequence spans 396 residues: MSHQPSIIRKTHPLLSLGNSMLVDLPSPANISAWWNFGSLLSLCLILQIITGLILAMHYTANTELAFSSVMHICRDVNNGWLMRNLHANGASMFFICIYAHIGRGIYYGSYLYKETWNVGVILFALTAATAFVGYVLPWGQMSFWGATVITNLISAMPYVGNDIVVWLWGGFSVSNATLTRFFTFHFILPFILAAMTMIHIMFLHQTGSSNPMGINSNLDKIQFHPYFSFKDILGFVILLGILFMISLLAPNALGEPDNFIYANPLSTPPHIKPEWYFLFAYAILRSVPNKLGGVVALAAAIMILLIIPFTHTSKQRGMQFRPLAQITFWILIADLALLTWLGGEPAEYPFILMTQIASTVYFMIFILVFPILGYLENKMLLMSKNTGKFNWKLVY.

4 helical membrane-spanning segments follow: residues 37–57, 81–102, 117–137, and 182–202; these read FGSL…ILAM, WLMR…YAHI, WNVG…GYVL, and FFTF…IHIM. Residues His-87 and His-101 each coordinate heme b. Residues His-186 and His-200 each coordinate heme b. His-205 provides a ligand contact to a ubiquinone. 4 helical membrane-spanning segments follow: residues 230–250, 292–312, 324–344, and 351–371; these read FKDI…SLLA, LGGV…PFTH, LAQI…WLGG, and FILM…LVFP.

Belongs to the cytochrome b family. As to quaternary structure, the cytochrome bc1 complex contains 3 respiratory subunits (MT-CYB, CYC1 and UQCRFS1), 2 core proteins (UQCRC1 and UQCRC2) and probably 6 low-molecular weight proteins. Requires heme b as cofactor.

It localises to the mitochondrion inner membrane. Its function is as follows. Component of the ubiquinol-cytochrome c reductase complex (complex III or cytochrome b-c1 complex) that is part of the mitochondrial respiratory chain. The b-c1 complex mediates electron transfer from ubiquinol to cytochrome c. Contributes to the generation of a proton gradient across the mitochondrial membrane that is then used for ATP synthesis. The sequence is that of Cytochrome b (mt-cyb) from Petromyzon marinus (Sea lamprey).